The following is a 497-amino-acid chain: FAD-linked oxidoreductase fmqD (497 aa).

An N-terminal signal peptide occupies residues 1–17 (MQYIPFLISGLVPVALS). An FAD-binding PCMH-type domain is found at 68-243 (NDPSYVATVK…TSATYRIYDQ (176 aa)). N-linked (GlcNAc...) asparagine glycans are attached at residues N99, N261, and N288.

The protein belongs to the oxygen-dependent FAD-linked oxidoreductase family.

The protein resides in the secreted. The protein localises to the cell wall. It functions in the pathway alkaloid biosynthesis. In terms of biological role, FAD-linked oxidoreductase; part of the gene cluster that mediates the biosynthesis of the antitumor fumiquinazolines that confer a dual-usage capability to defend against phagocytes in the environment and animal hosts. The simplest member is fumiquinazoline F (FQF) with a 6-6-6 tricyclic core derived from anthranilic acid (Ant), tryptophan (Trp), and alanine (Ala). The trimodular NRPS fmqA is responsible for FQF formation. Modules 1, 2 and 3 of fmqA are predicted to activate and load Ant, Trp and Ala, respectively, providing for the assembly of an Ant-Trp-Ala-S-enzyme intermediate that would undergo double cyclization for chain release and generation of the tricyclic 6-6-6 product fumiquinazoline F. The presence of an E domain predicted for module 2 of fmqA is consistent with epimerization of L-Trp to D-Trp during assembly to generate the R-stereocenter at C14 of FQF. The FAD-dependent monooxygenase fmqB and the monomodular NRPS fmqC then maturate FQF to FQA. FmqB oxidizes the 2',3'-double bond of the indole side chain of FQF, and fmqC activates L-Ala as the adenylate, installs it as the pantetheinyl thioester on its carrier protein domain, and acylates the oxidized indole for subsequent intramolecular cyclization to create the 6-5-5-imidazolindolone of FQA. The FAD-linked oxidoreductase fmqD introduces a third layer of scaffold complexity by converting FQA to the spirohemiaminal FQC, presumably by catalyzing the formation of a transient imine within the pyrazinone ring. FQC subsequently converts nonenzymatically to the known cyclic aminal FQD. This is FAD-linked oxidoreductase fmqD from Aspergillus fumigatus (strain ATCC MYA-4609 / CBS 101355 / FGSC A1100 / Af293) (Neosartorya fumigata).